The primary structure comprises 354 residues: Sulfate/thiosulfate import ATP-binding protein CysA (354 aa).

The ABC transporter domain occupies 3–237 (IEVRGLSKRF…PATPFVYGFL (235 aa)). Position 35–42 (35–42 (GPSGCGKT)) interacts with ATP.

Belongs to the ABC transporter superfamily. Sulfate/tungstate importer (TC 3.A.1.6) family. The complex is composed of two ATP-binding proteins (CysA), two transmembrane proteins (CysT and CysW) and a solute-binding protein (CysP).

It is found in the cell inner membrane. The enzyme catalyses sulfate(out) + ATP + H2O = sulfate(in) + ADP + phosphate + H(+). It carries out the reaction thiosulfate(out) + ATP + H2O = thiosulfate(in) + ADP + phosphate + H(+). In terms of biological role, part of the ABC transporter complex CysAWTP involved in sulfate/thiosulfate import. Responsible for energy coupling to the transport system. The chain is Sulfate/thiosulfate import ATP-binding protein CysA from Bordetella bronchiseptica (strain ATCC BAA-588 / NCTC 13252 / RB50) (Alcaligenes bronchisepticus).